Reading from the N-terminus, the 339-residue chain is NADH-quinone oxidoreductase subunit H (339 aa).

Helical transmembrane passes span 9–29 (IFPL…LILC), 50–70 (PNVV…KLLF), 82–102 (ILFV…WAVI), 115–135 (VGVL…IIAG), 161–181 (MGLV…SQIV), 187–207 (MPWW…ISVL), 235–255 (MGFA…SAMT), 275–295 (IPGF…FLWI), and 311–331 (GWKV…SVLI).

The protein belongs to the complex I subunit 1 family. In terms of assembly, NDH-1 is composed of 14 different subunits. Subunits NuoA, H, J, K, L, M, N constitute the membrane sector of the complex.

The protein resides in the cell inner membrane. The enzyme catalyses a quinone + NADH + 5 H(+)(in) = a quinol + NAD(+) + 4 H(+)(out). Its function is as follows. NDH-1 shuttles electrons from NADH, via FMN and iron-sulfur (Fe-S) centers, to quinones in the respiratory chain. The immediate electron acceptor for the enzyme in this species is believed to be ubiquinone. Couples the redox reaction to proton translocation (for every two electrons transferred, four hydrogen ions are translocated across the cytoplasmic membrane), and thus conserves the redox energy in a proton gradient. This subunit may bind ubiquinone. The polypeptide is NADH-quinone oxidoreductase subunit H (Rickettsia bellii (strain RML369-C)).